The primary structure comprises 387 residues: MSDYLFTSESVGEGHPDKVADQISDAILDAILAQDKHSRVAAETLCNTGLVVLAGEITTNANVDYIQVARDTIKRIGYDNTEYGIDYKGCAVLVAYDKQSPDIAQGVNAAYDDNLGQGAGDQGLMFGYACDETPSLMPLPIYLSHRMVERQAMLRKDGRLPWARPDAKSQVTIRYVDGKPHSIDTVVLSTQHSPDISLEDLREATIEQIIKPVLPKELIKGDIKYLVNPTGRFVVGGPQGDCGLTGRKIIVDTYGGAAPHGGGAFSGKDPSKVDRSAAYATRYVAKNIVAAGLASRCLVQVSYAIGVAEPTSIMVETYGTGKVSNETLTALVRKHFDLRPKGIVNMLDLLRPIYQKTAAYGHFGRDEPEFTWEATDRANLLKSDAGL.

Residue His15 coordinates ATP. Asp17 serves as a coordination point for Mg(2+). Position 43 (Glu43) interacts with K(+). 2 residues coordinate L-methionine: Glu56 and Gln99. Positions 99 to 109 (QSPDIAQGVNA) are flexible loop. ATP contacts are provided by residues 166–168 (DAK), 232–233 (RF), Asp241, 247–248 (RK), Ala264, and Lys268. Position 241 (Asp241) interacts with L-methionine. Lys272 lines the L-methionine pocket.

It belongs to the AdoMet synthase family. In terms of assembly, homotetramer; dimer of dimers. The cofactor is Mg(2+). K(+) serves as cofactor.

The protein localises to the cytoplasm. It catalyses the reaction L-methionine + ATP + H2O = S-adenosyl-L-methionine + phosphate + diphosphate. It participates in amino-acid biosynthesis; S-adenosyl-L-methionine biosynthesis; S-adenosyl-L-methionine from L-methionine: step 1/1. In terms of biological role, catalyzes the formation of S-adenosylmethionine (AdoMet) from methionine and ATP. The overall synthetic reaction is composed of two sequential steps, AdoMet formation and the subsequent tripolyphosphate hydrolysis which occurs prior to release of AdoMet from the enzyme. The chain is S-adenosylmethionine synthase from Dechloromonas aromatica (strain RCB).